We begin with the raw amino-acid sequence, 197 residues long: Large ribosomal subunit protein uL13B (197 aa).

Residue Ser-193 is modified to Phosphoserine.

It belongs to the universal ribosomal protein uL13 family. In terms of assembly, component of the large ribosomal subunit (LSU). Mature yeast ribosomes consist of a small (40S) and a large (60S) subunit. The 40S small subunit contains 1 molecule of ribosomal RNA (18S rRNA) and at least 33 different proteins. The large 60S subunit contains 3 rRNA molecules (25S, 5.8S and 5S rRNA) and at least 46 different proteins.

Its subcellular location is the cytoplasm. Its function is as follows. Component of the ribosome, a large ribonucleoprotein complex responsible for the synthesis of proteins in the cell. The small ribosomal subunit (SSU) binds messenger RNAs (mRNAs) and translates the encoded message by selecting cognate aminoacyl-transfer RNA (tRNA) molecules. The large subunit (LSU) contains the ribosomal catalytic site termed the peptidyl transferase center (PTC), which catalyzes the formation of peptide bonds, thereby polymerizing the amino acids delivered by tRNAs into a polypeptide chain. The nascent polypeptides leave the ribosome through a tunnel in the LSU and interact with protein factors that function in enzymatic processing, targeting, and the membrane insertion of nascent chains at the exit of the ribosomal tunnel. This Schizosaccharomyces pombe (strain 972 / ATCC 24843) (Fission yeast) protein is Large ribosomal subunit protein uL13B (rpl1601).